The primary structure comprises 213 residues: 3-oxoadipate CoA-transferase subunit B (213 aa).

Residue Glu-50 is part of the active site.

This sequence belongs to the 3-oxoacid CoA-transferase subunit B family. As to quaternary structure, heterodimer.

The catalysed reaction is 3-oxoadipate + succinyl-CoA = 3-oxoadipyl-CoA + succinate. It functions in the pathway aromatic compound metabolism; beta-ketoadipate pathway; acetyl-CoA and succinyl-CoA from 3-oxoadipate: step 1/2. This is 3-oxoadipate CoA-transferase subunit B (pcaJ) from Pseudomonas putida (strain ATCC 47054 / DSM 6125 / CFBP 8728 / NCIMB 11950 / KT2440).